Here is a 310-residue protein sequence, read N- to C-terminus: MSSLVTQINFNKINNSQSTVKDYILLMKPRVMSLVIFTGFVGMWLAPDSIHPLIAGIAVICIALGAGSAGAMNMWYDRDIDILMKRTQNRPIVRGVIEPDEALSFGLITGFFAVFFMALCVNILASFLLLFTIFYYICIYTIWLKRRSIQNIVIGGVSGALPPVIGHAAVSNTISLESIILFLIIFIWTPPHSWAIALFCNDDYKHCKIPMMPVVKGTLYTKKQILIYSIILFIVSLMPFFIGMNNDIYLIIVCIIGLVFLYYAFSLFYDTPDNKQAKRFFTYSIFYLCFIFILLSSTSTIHSLRDIIFG.

Helical transmembrane passes span 31 to 51 (VMSLVIFTGFVGMWLAPDSIH), 52 to 72 (PLIAGIAVICIALGAGSAGAM), 102 to 119 (ALSFGLITGFFAVFFMAL), 123 to 145 (ILASFLLLFTIFYYICIYTIWLK), 151 to 171 (NIVIGGVSGALPPVIGHAAVS), 179 to 199 (IILFLIIFIWTPPHSWAIALF), 225 to 245 (ILIYSIILFIVSLMPFFIGMN), 248 to 268 (IYLIIVCIIGLVFLYYAFSLF), and 281 to 301 (FTYSIFYLCFIFILLSSTSTI).

It belongs to the UbiA prenyltransferase family. Protoheme IX farnesyltransferase subfamily.

It is found in the cell inner membrane. It carries out the reaction heme b + (2E,6E)-farnesyl diphosphate + H2O = Fe(II)-heme o + diphosphate. Its pathway is porphyrin-containing compound metabolism; heme O biosynthesis; heme O from protoheme: step 1/1. Functionally, converts heme B (protoheme IX) to heme O by substitution of the vinyl group on carbon 2 of heme B porphyrin ring with a hydroxyethyl farnesyl side group. The protein is Protoheme IX farnesyltransferase of Rickettsia prowazekii (strain Madrid E).